The following is a 411-amino-acid chain: Serine hydroxymethyltransferase (411 aa).

Residues Leu-117 and 121–123 each bind (6S)-5,6,7,8-tetrahydrofolate; that span reads GHL. N6-(pyridoxal phosphate)lysine is present on Lys-226. Residues Glu-241 and 349–351 contribute to the (6S)-5,6,7,8-tetrahydrofolate site; that span reads SPF.

It belongs to the SHMT family. Homodimer. It depends on pyridoxal 5'-phosphate as a cofactor.

The protein resides in the cytoplasm. The catalysed reaction is (6R)-5,10-methylene-5,6,7,8-tetrahydrofolate + glycine + H2O = (6S)-5,6,7,8-tetrahydrofolate + L-serine. It participates in one-carbon metabolism; tetrahydrofolate interconversion. It functions in the pathway amino-acid biosynthesis; glycine biosynthesis; glycine from L-serine: step 1/1. Functionally, catalyzes the reversible interconversion of serine and glycine with tetrahydrofolate (THF) serving as the one-carbon carrier. This reaction serves as the major source of one-carbon groups required for the biosynthesis of purines, thymidylate, methionine, and other important biomolecules. Also exhibits THF-independent aldolase activity toward beta-hydroxyamino acids, producing glycine and aldehydes, via a retro-aldol mechanism. The protein is Serine hydroxymethyltransferase of Oceanobacillus iheyensis (strain DSM 14371 / CIP 107618 / JCM 11309 / KCTC 3954 / HTE831).